The following is a 156-amino-acid chain: MRTFEGSFCGKDLKLAIVVSRFNSFITDELLKGCLDGLSRHDVDSENIDVYYVPGAFEIPLVAKKLAKSKKYNAIIALGAVIRGSTPHFEYVSAEVSKGIANVSLEQEVPVIFGVLTCDTVDQAIERAGTKAGNKGFDAALSALEMANLMKNISES.

Residues Phe-22, 56–58 (AFE), and 80–82 (AVI) contribute to the 5-amino-6-(D-ribitylamino)uracil site. Position 85–86 (85–86 (ST)) interacts with (2S)-2-hydroxy-3-oxobutyl phosphate. The active-site Proton donor is the His-88. Residue Phe-113 coordinates 5-amino-6-(D-ribitylamino)uracil. (2S)-2-hydroxy-3-oxobutyl phosphate is bound at residue Arg-127.

It belongs to the DMRL synthase family.

It catalyses the reaction (2S)-2-hydroxy-3-oxobutyl phosphate + 5-amino-6-(D-ribitylamino)uracil = 6,7-dimethyl-8-(1-D-ribityl)lumazine + phosphate + 2 H2O + H(+). It participates in cofactor biosynthesis; riboflavin biosynthesis; riboflavin from 2-hydroxy-3-oxobutyl phosphate and 5-amino-6-(D-ribitylamino)uracil: step 1/2. Its function is as follows. Catalyzes the formation of 6,7-dimethyl-8-ribityllumazine by condensation of 5-amino-6-(D-ribitylamino)uracil with 3,4-dihydroxy-2-butanone 4-phosphate. This is the penultimate step in the biosynthesis of riboflavin. This is 6,7-dimethyl-8-ribityllumazine synthase from Caldicellulosiruptor saccharolyticus (strain ATCC 43494 / DSM 8903 / Tp8T 6331).